The sequence spans 416 residues: Serine hydroxymethyltransferase (416 aa).

Residues L118 and G122–L124 each bind (6S)-5,6,7,8-tetrahydrofolate. At K226 the chain carries N6-(pyridoxal phosphate)lysine. Residues E242 and S350 to F352 each bind (6S)-5,6,7,8-tetrahydrofolate.

This sequence belongs to the SHMT family. In terms of assembly, homodimer. Pyridoxal 5'-phosphate serves as cofactor.

The protein localises to the cytoplasm. It carries out the reaction (6R)-5,10-methylene-5,6,7,8-tetrahydrofolate + glycine + H2O = (6S)-5,6,7,8-tetrahydrofolate + L-serine. It participates in one-carbon metabolism; tetrahydrofolate interconversion. Its pathway is amino-acid biosynthesis; glycine biosynthesis; glycine from L-serine: step 1/1. Catalyzes the reversible interconversion of serine and glycine with tetrahydrofolate (THF) serving as the one-carbon carrier. This reaction serves as the major source of one-carbon groups required for the biosynthesis of purines, thymidylate, methionine, and other important biomolecules. Also exhibits THF-independent aldolase activity toward beta-hydroxyamino acids, producing glycine and aldehydes, via a retro-aldol mechanism. The protein is Serine hydroxymethyltransferase of Helicobacter acinonychis (strain Sheeba).